The following is a 282-amino-acid chain: Glutamate racemase (282 aa).

Residues 13-14 (DS) and 45-46 (YG) each bind substrate. Cysteine 76 serves as the catalytic Proton donor/acceptor. 77–78 (NT) provides a ligand contact to substrate. Cysteine 186 (proton donor/acceptor) is an active-site residue. Position 187–188 (187–188 (TH)) interacts with substrate.

The protein belongs to the aspartate/glutamate racemases family.

The enzyme catalyses L-glutamate = D-glutamate. It functions in the pathway cell wall biogenesis; peptidoglycan biosynthesis. Provides the (R)-glutamate required for cell wall biosynthesis. The protein is Glutamate racemase of Ralstonia pickettii (strain 12J).